The chain runs to 1330 residues: MGTASSLVSPAGGEVIEDTYGAGGGEACEIPVEVKPKARLLRNSFRRGAGAAAGAGPGSLPRGVGAGGLLGASFKSTGSSVPELEYAAAEYERLRKEYEIFRVSKNQELLSMGRREAKLDTENKRLRAELQALQKTYQKILREKESALEAKYQAMERAATFEHDRDKVKRQFKIFRETKENEIQDLLRAKRELESKLQRLQAQGIQVFDPGESDSDDNCTDVTAAGTQCEYWTGGALGSEPSIGSMIQLQQSFRGPEFAHSSIDVEGPFANVNRDDWDIAVASLLQVTPLFSHSLWSNTVRCYLIYTDETQPEMDLFLKDYSPKLKRMCETMGYFFHAVYFPIDVENQYLTVRKWEIEKSSLVILFIHLTLPSLLLEDCEEAFLKNPEGKPRLIFHRLEDGKVSSDSVQQLIDQVSNLNKTSKAKIIDHSGDPAEGVYKTYICVEKIIKQDILGFENTDLETKDLGSEDSIPEEDDFGDVLWDIHDEQEQMETFQQASNSAHELGFEKYYQRLNDLVAAPAPIPPLLVSGGPGSGKSLLLSKWIQLQQKNSPNTLILSHFVGRPMSTSSESSLIIKRLTLKLMQHSWSVSALTLDPAKLLEEFPRWLEKLSARHQGSIIIVIDSIDQVQQVEKHMKWLIDPLPVNVRVIVSVNVETCPPAWRLWPTLHLDPLSPKDAKSIIIAECHSVDIKLSKEQEKKLERHCRSATTCNALYVTLFGKMIARAGRAGNLDKILHQCFQCQDTLSLYRLVLHSIRESMANDVDKELMKQILCLVNVSHNGVSESELMELYPEMSWTFLTSLIHSLYKMCLLTYGCGLLRFQHLQAWETVRLEYLEGPTVTSSYRQKLINYFTLQLSQDRVTWRSADELPWLFQQQGSKQKLHDCLLNLFVSQNLYKRGHFAELLSYWQFVGKDKSAMATEYFDSLKQYEKNCEGEDNMSCLADLYETLGRFLKDLGLLSQAIVPLQRSLEIRETALDPDHPRVAQSLHQLASVYVQWKKFGNAEQLYKQALEISENAYGADHPYTARELEALATLYQKQNKYEQAEHFRKKSFKIHQKAIKKKGNLYGFALLRRRALQLEELTLGKDTPDNARTLNELGVLYYLQNNLETADQFLKRSLEMRERVLGPDHPDCAQSLNNLAALCNEKKQYDKAEELYERALDIRRRALAPDHPSLAYTVKHLAILYKKMGKLDKAVPLYELAVEIRQKSFGPKHPSVATALVNLAVLYSQMKKHVEALPLYERALKIYEDSLGRMHPRVGETLKNLAVLSYEGGDFEKAAELYKRAMEIKEAETSLLGGKAPSRHSSSGDTFSLKTAHSPNVFLQQGQR.

Residue G2 is the site of N-myristoyl glycine attachment. A coiled-coil region spans residues E83–V207. TPR repeat units follow at residues I471 to L504, C885 to M918, T920 to L942, A943 to A976, A985 to A1018, A1027 to A1060, A1093 to V1126, A1135 to A1168, A1177 to S1210, A1219 to S1252, and G1261 to E1294. The interval S1296–R1330 is disordered. The segment covering R1305–R1330 has biased composition (polar residues).

Interacts with NPHP1 and INVS/NPHP2. Interacts (when myristoylated) with UNC119 and UNC119B; interaction is required for localization to cilium. Interacts with CEP164. Component of a complex containing at least ANKS6, INVS, NEK8 and NPHP3. ANKS6 may organize complex assembly by linking INVS and NPHP3 to NEK8 and INVS may target the complex to the proximal ciliary axoneme. Widely expressed at low level. Expressed in heart, placenta, liver, skeletal muscle, kidney and pancreas. Expressed at very low level in brain and lung.

The protein resides in the cell projection. The protein localises to the cilium. Its function is as follows. Required for normal ciliary development and function. Inhibits disheveled-1-induced canonical Wnt-signaling activity and may also play a role in the control of non-canonical Wnt signaling which regulates planar cell polarity. Probably acts as a molecular switch between different Wnt signaling pathways. Required for proper convergent extension cell movements. In Homo sapiens (Human), this protein is Nephrocystin-3 (NPHP3).